Consider the following 396-residue polypeptide: L-lactate dehydrogenase (396 aa).

One can recognise an FMN hydroxy acid dehydrogenase domain in the interval 1–380 (MIISAASDYR…SGDSLVQELG (380 aa)). A substrate-binding site is contributed by tyrosine 24. FMN-binding residues include serine 106 and glutamine 127. Tyrosine 129 lines the substrate pocket. Residue threonine 155 participates in FMN binding. Arginine 164 is a substrate binding site. Residue lysine 251 coordinates FMN. The active-site Proton acceptor is histidine 275. A substrate-binding site is contributed by arginine 278. 306-330 (DSGIRNGLDVVRMIALGADTVLLGR) provides a ligand contact to FMN.

This sequence belongs to the FMN-dependent alpha-hydroxy acid dehydrogenase family. The cofactor is FMN.

Its subcellular location is the cell inner membrane. The catalysed reaction is (S)-lactate + A = pyruvate + AH2. Catalyzes the conversion of L-lactate to pyruvate. Is coupled to the respiratory chain. The chain is L-lactate dehydrogenase from Salmonella typhimurium (strain LT2 / SGSC1412 / ATCC 700720).